We begin with the raw amino-acid sequence, 185 residues long: MYIGVISMRYAKALLAYADEKGTEDTVYEEAGILADSFSRIPELRQALDNPVLPAETKLKLICEAAGGGKVSEELKRFVELVLEERREKFLQFMIMSYIDLYRKQKNISVGKITTVCPVAEEVVNRIRALVVEKTHGTVEFKTKIDPKLEGGFIFEIGTYRLDASVANQIKRVKQQFIAKNRRIV.

It belongs to the ATPase delta chain family. In terms of assembly, F-type ATPases have 2 components, F(1) - the catalytic core - and F(0) - the membrane proton channel. F(1) has five subunits: alpha(3), beta(3), gamma(1), delta(1), epsilon(1). F(0) has three main subunits: a(1), b(2) and c(10-14). The alpha and beta chains form an alternating ring which encloses part of the gamma chain. F(1) is attached to F(0) by a central stalk formed by the gamma and epsilon chains, while a peripheral stalk is formed by the delta and b chains.

The protein resides in the cell inner membrane. In terms of biological role, f(1)F(0) ATP synthase produces ATP from ADP in the presence of a proton or sodium gradient. F-type ATPases consist of two structural domains, F(1) containing the extramembraneous catalytic core and F(0) containing the membrane proton channel, linked together by a central stalk and a peripheral stalk. During catalysis, ATP synthesis in the catalytic domain of F(1) is coupled via a rotary mechanism of the central stalk subunits to proton translocation. Its function is as follows. This protein is part of the stalk that links CF(0) to CF(1). It either transmits conformational changes from CF(0) to CF(1) or is implicated in proton conduction. The sequence is that of ATP synthase subunit delta from Phocaeicola vulgatus (strain ATCC 8482 / DSM 1447 / JCM 5826 / CCUG 4940 / NBRC 14291 / NCTC 11154) (Bacteroides vulgatus).